Reading from the N-terminus, the 335-residue chain is Holliday junction branch migration complex subunit RuvB (335 aa).

The segment at 1 to 181 is large ATPase domain (RuvB-L); sequence MDRIVEIEKY…FGMQFRLEFY (181 aa). ATP-binding positions include Leu-20, Arg-21, Gly-62, Lys-65, Thr-66, Thr-67, 128 to 130, Arg-171, Tyr-181, and Arg-218; that span reads EDY. A Mg(2+)-binding site is contributed by Thr-66. The small ATPAse domain (RuvB-S) stretch occupies residues 182-252; sequence KDSELALILQ…RANEALNSLG (71 aa). Residues 255-335 are head domain (RuvB-H); sequence ELGFDAMDLR…LNYEKTLFEE (81 aa). DNA contacts are provided by Arg-309 and Arg-314.

The protein belongs to the RuvB family. In terms of assembly, homohexamer. Forms an RuvA(8)-RuvB(12)-Holliday junction (HJ) complex. HJ DNA is sandwiched between 2 RuvA tetramers; dsDNA enters through RuvA and exits via RuvB. An RuvB hexamer assembles on each DNA strand where it exits the tetramer. Each RuvB hexamer is contacted by two RuvA subunits (via domain III) on 2 adjacent RuvB subunits; this complex drives branch migration. In the full resolvosome a probable DNA-RuvA(4)-RuvB(12)-RuvC(2) complex forms which resolves the HJ.

The protein resides in the cytoplasm. The enzyme catalyses ATP + H2O = ADP + phosphate + H(+). In terms of biological role, the RuvA-RuvB-RuvC complex processes Holliday junction (HJ) DNA during genetic recombination and DNA repair, while the RuvA-RuvB complex plays an important role in the rescue of blocked DNA replication forks via replication fork reversal (RFR). RuvA specifically binds to HJ cruciform DNA, conferring on it an open structure. The RuvB hexamer acts as an ATP-dependent pump, pulling dsDNA into and through the RuvAB complex. RuvB forms 2 homohexamers on either side of HJ DNA bound by 1 or 2 RuvA tetramers; 4 subunits per hexamer contact DNA at a time. Coordinated motions by a converter formed by DNA-disengaged RuvB subunits stimulates ATP hydrolysis and nucleotide exchange. Immobilization of the converter enables RuvB to convert the ATP-contained energy into a lever motion, pulling 2 nucleotides of DNA out of the RuvA tetramer per ATP hydrolyzed, thus driving DNA branch migration. The RuvB motors rotate together with the DNA substrate, which together with the progressing nucleotide cycle form the mechanistic basis for DNA recombination by continuous HJ branch migration. Branch migration allows RuvC to scan DNA until it finds its consensus sequence, where it cleaves and resolves cruciform DNA. This is Holliday junction branch migration complex subunit RuvB from Campylobacter jejuni (strain RM1221).